Reading from the N-terminus, the 198-residue chain is NAD(P)H dehydrogenase (quinone) (198 aa).

Positions 4–189 constitute a Flavodoxin-like domain; sequence VLVLYYSMYG…ALARYQGRHV (186 aa). Residues 10 to 15 and 78 to 80 contribute to the FMN site; these read SMYGHV and TRF. An NAD(+)-binding site is contributed by Tyr-12. Trp-98 is a substrate binding site. FMN is bound by residues 113–118 and His-133; that span reads STGTGG.

This sequence belongs to the WrbA family. Requires FMN as cofactor.

It carries out the reaction a quinone + NADH + H(+) = a quinol + NAD(+). The enzyme catalyses a quinone + NADPH + H(+) = a quinol + NADP(+). This chain is NAD(P)H dehydrogenase (quinone), found in Halorhodospira halophila (strain DSM 244 / SL1) (Ectothiorhodospira halophila (strain DSM 244 / SL1)).